A 399-amino-acid polypeptide reads, in one-letter code: Presilphiperfolan-8-beta-ol synthase (399 aa).

Residues 1–60 (MAIPALEPQLHDADTSSNNMSSNSTDSGYDTNSTTPLEKSEKPNTQELKQQQLDPKRPPF) form a disordered region. Positions 15-27 (TSSNNMSSNSTDS) are enriched in low complexity. Over residues 28-37 (GYDTNSTTPL) the composition is skewed to polar residues. Mg(2+) contacts are provided by D141, N285, and S289. The DDXXD motif motif lies at 141 to 145 (DDQFD). Positions 373 and 374 each coordinate (2E,6E)-farnesyl diphosphate.

It belongs to the terpene synthase family. Requires Mg(2+) as cofactor.

The catalysed reaction is (2E,6E)-farnesyl diphosphate + H2O = presilphiperfolan-8beta-ol + diphosphate. It functions in the pathway secondary metabolite biosynthesis. In terms of biological role, presilphiperfolan-8-beta-ol synthase; part of the gene cluster that mediates the biosynthesis of botrydial. Botrydial is necessary for colonization of plant tissue by the T4 strain. It is a strain-dependent virulence factor since highly aggressive strains like SAS56 or B05 still retain substantial virulence when botrydial synthesis is impaired, since they produce also botcinic acid. The first step of botrydial biosynthesis is performed by the sesquiterpene synthase BOT2 which catalyzes the cyclization of farnesyl diphosphate (FPP) to presilphiperfolan-8-beta-ol (PSP). The cytochrome P450 monooxygenase BOT4 then catalyzes the hydroxylation at C-4 to give a probotryane intermediate. Acetylation of the hydroxyl at C-4 is carried out by the acetyltransferase BOT5, followed by the combined action of the P450 monooxygenases BOT3 and BOT1, to yield finally the glycol, via the regio- and stereospecific hydroxylations at C-10 and C-15 of the probotryane intermediates, respectively. The cleavage of the C10-C15 bond of probotryane skeleton is an intriguing and chemically important reaction, which could be mediated by some of the monooxygenases or by a combination of them. It is possible that either BOT3 or BOT1 would oxidize either the 10- or the 15-hydroxy group to the hydroperoxide derivative, which would then undergo heterolytic fragmentation to give the dialdehyde botrydial. Finally, the dehydrogenase BOT7 might be involved in the conversion of botrydial to dihydrobotrydial. The polypeptide is Presilphiperfolan-8-beta-ol synthase (BOT2) (Botryotinia fuckeliana (Noble rot fungus)).